The chain runs to 415 residues: Serine hydroxymethyltransferase (415 aa).

Residues Leu-117 and 121-123 (GHL) each bind (6S)-5,6,7,8-tetrahydrofolate. N6-(pyridoxal phosphate)lysine is present on Lys-225. (6S)-5,6,7,8-tetrahydrofolate is bound by residues Glu-241 and 349 to 351 (SPF).

Belongs to the SHMT family. Homodimer. The cofactor is pyridoxal 5'-phosphate.

The protein resides in the cytoplasm. It carries out the reaction (6R)-5,10-methylene-5,6,7,8-tetrahydrofolate + glycine + H2O = (6S)-5,6,7,8-tetrahydrofolate + L-serine. It participates in one-carbon metabolism; tetrahydrofolate interconversion. Its pathway is amino-acid biosynthesis; glycine biosynthesis; glycine from L-serine: step 1/1. Its function is as follows. Catalyzes the reversible interconversion of serine and glycine with tetrahydrofolate (THF) serving as the one-carbon carrier. This reaction serves as the major source of one-carbon groups required for the biosynthesis of purines, thymidylate, methionine, and other important biomolecules. Also exhibits THF-independent aldolase activity toward beta-hydroxyamino acids, producing glycine and aldehydes, via a retro-aldol mechanism. This chain is Serine hydroxymethyltransferase, found in Campylobacter hominis (strain ATCC BAA-381 / DSM 21671 / CCUG 45161 / LMG 19568 / NCTC 13146 / CH001A).